The chain runs to 642 residues: Threonine--tRNA ligase (642 aa).

A TGS domain is found at 1 to 61 (MPVITLPDGS…ENDATLAIIT (61 aa)). A catalytic region spans residues 243-534 (DHRKIGKQLD…LTEEFAGFFP (292 aa)). Cysteine 334, histidine 385, and histidine 511 together coordinate Zn(2+).

This sequence belongs to the class-II aminoacyl-tRNA synthetase family. In terms of assembly, homodimer. Zn(2+) serves as cofactor.

The protein resides in the cytoplasm. It carries out the reaction tRNA(Thr) + L-threonine + ATP = L-threonyl-tRNA(Thr) + AMP + diphosphate + H(+). Catalyzes the attachment of threonine to tRNA(Thr) in a two-step reaction: L-threonine is first activated by ATP to form Thr-AMP and then transferred to the acceptor end of tRNA(Thr). Also edits incorrectly charged L-seryl-tRNA(Thr). The chain is Threonine--tRNA ligase from Salmonella paratyphi C (strain RKS4594).